A 550-amino-acid chain; its full sequence is Dihydroxy-acid dehydratase (550 aa).

A Mg(2+)-binding site is contributed by aspartate 81. Cysteine 122 serves as a coordination point for [2Fe-2S] cluster. Positions 123 and 124 each coordinate Mg(2+). Position 124 is an N6-carboxylysine (lysine 124). A [2Fe-2S] cluster-binding site is contributed by cysteine 194. Glutamate 442 provides a ligand contact to Mg(2+). The Proton acceptor role is filled by serine 467.

This sequence belongs to the IlvD/Edd family. Homodimer. The cofactor is [2Fe-2S] cluster. Mg(2+) serves as cofactor.

It carries out the reaction (2R)-2,3-dihydroxy-3-methylbutanoate = 3-methyl-2-oxobutanoate + H2O. The catalysed reaction is (2R,3R)-2,3-dihydroxy-3-methylpentanoate = (S)-3-methyl-2-oxopentanoate + H2O. It functions in the pathway amino-acid biosynthesis; L-isoleucine biosynthesis; L-isoleucine from 2-oxobutanoate: step 3/4. Its pathway is amino-acid biosynthesis; L-valine biosynthesis; L-valine from pyruvate: step 3/4. In terms of biological role, functions in the biosynthesis of branched-chain amino acids. Catalyzes the dehydration of (2R,3R)-2,3-dihydroxy-3-methylpentanoate (2,3-dihydroxy-3-methylvalerate) into 2-oxo-3-methylpentanoate (2-oxo-3-methylvalerate) and of (2R)-2,3-dihydroxy-3-methylbutanoate (2,3-dihydroxyisovalerate) into 2-oxo-3-methylbutanoate (2-oxoisovalerate), the penultimate precursor to L-isoleucine and L-valine, respectively. The sequence is that of Dihydroxy-acid dehydratase from Methanoregula boonei (strain DSM 21154 / JCM 14090 / 6A8).